Reading from the N-terminus, the 161-residue chain is Putative pre-16S rRNA nuclease (161 aa).

It belongs to the YqgF nuclease family.

It is found in the cytoplasm. Could be a nuclease involved in processing of the 5'-end of pre-16S rRNA. The sequence is that of Putative pre-16S rRNA nuclease from Bradyrhizobium sp. (strain BTAi1 / ATCC BAA-1182).